The sequence spans 852 residues: Kinesin-like protein KIF18B (852 aa).

The Kinesin motor domain occupies 7 to 351; that stretch reads TLQVVVRVRP…LKYADRAKEI (345 aa). 109–116 contacts ATP; it reads GATGAGKT. The stretch at 366 to 393 forms a coiled coil; that stretch reads ISQYATICQQLQAEVAALRKKLQVYEGG. 2 disordered regions span residues 390-424 and 437-485; these read YEGG…PAGP and QVER…RLTL. A Phosphoserine modification is found at Ser-404. Thr-417 is subject to Phosphothreonine. Over residues 451–461 the composition is skewed to acidic residues; it reads QSPEDEDEGPA. Phosphoserine is present on residues Ser-452, Ser-480, and Ser-558. 2 disordered regions span residues 575–594 and 602–689; these read IPVP…PVTR and GPLH…SPRV. The segment covering 577-588 has biased composition (pro residues); the sequence is VPSPLCPEPPGY. Positions 624-632 match the Nuclear localization signal motif; the sequence is PMEKKRRRP. Phosphoserine is present on residues Ser-633 and Ser-639. Residues 653–656 carry the MAPRE1-binding motif; the sequence is SFLP. Ser-662 is subject to Phosphoserine. A compositionally biased stretch (polar residues) spans 664–673; the sequence is PDTQPSQGPS. Thr-674 carries the phosphothreonine modification. The segment at 711–736 is KIF2C-binding; it reads TPLALPTRDLNATFDLSEEPPSKPSF. The interval 767 to 798 is disordered; sequence MKGPKPTSSLPGTSACKKKRVASSSVSHGRSR. 2 short sequence motifs (MAPRE1-binding) span residues 774–777 and 800–803; these read SSLP and ARLP. Ser-822 is subject to Phosphoserine.

Belongs to the TRAFAC class myosin-kinesin ATPase superfamily. Kinesin family. As to quaternary structure, interacts with MAPRE1; this interaction is required for efficient accumulation at microtubule plus ends. Interacts with KIF2C at microtubule tips; this interaction increases the affinity of both partners for microtubule plus ends and is required for robust microtubule depolymerization. KIF2C phosphorylation by AURKA or AURKB strongly reduces KIF18B-binding. In terms of tissue distribution, shows a prominent expression in the amygdala.

Its subcellular location is the nucleus. It is found in the cytoplasm. The protein resides in the cytoskeleton. Functionally, in complex with KIF2C, constitutes the major microtubule plus-end depolymerizing activity in mitotic cells. Its major role may be to transport KIF2C and/or MAPRE1 along microtubules. This Homo sapiens (Human) protein is Kinesin-like protein KIF18B (KIF18B).